The primary structure comprises 176 residues: MSTDVSTLIDRYVRDIPDYPQPGVVFKDITPLLSHPTALRTAIDALAEPLLGSEIDLVAGLEARGFIFAAPVAVRLGAGFVPLRKAGKLPAETLAESYDLEYGTATVEMHADAVPPGSRVLIVDDVLATGGTGRAAVDLIRRAGGTVVGLSVLLELGFLKGREKLADVELRALATV.

The protein belongs to the purine/pyrimidine phosphoribosyltransferase family. Homodimer.

The protein localises to the cytoplasm. The enzyme catalyses AMP + diphosphate = 5-phospho-alpha-D-ribose 1-diphosphate + adenine. It participates in purine metabolism; AMP biosynthesis via salvage pathway; AMP from adenine: step 1/1. Its function is as follows. Catalyzes a salvage reaction resulting in the formation of AMP, that is energically less costly than de novo synthesis. The sequence is that of Adenine phosphoribosyltransferase from Thermobifida fusca (strain YX).